We begin with the raw amino-acid sequence, 339 residues long: Ribosomal RNA small subunit methyltransferase H (339 aa).

Residues 36–38 (GGY), Asp55, Phe82, Asp103, and Gln110 each bind S-adenosyl-L-methionine. Residues 286–319 (GPIGPSEAEATANPRARSAKLRAGERTDAPIPEP) are disordered.

The protein belongs to the methyltransferase superfamily. RsmH family.

The protein localises to the cytoplasm. It carries out the reaction cytidine(1402) in 16S rRNA + S-adenosyl-L-methionine = N(4)-methylcytidine(1402) in 16S rRNA + S-adenosyl-L-homocysteine + H(+). Functionally, specifically methylates the N4 position of cytidine in position 1402 (C1402) of 16S rRNA. This chain is Ribosomal RNA small subunit methyltransferase H, found in Methylobacterium nodulans (strain LMG 21967 / CNCM I-2342 / ORS 2060).